Here is a 103-residue protein sequence, read N- to C-terminus: RNA-binding protein Hfq (103 aa).

The Sm domain maps to 9–68 (DPFLNALRRERVPVSIYLVNGIKLQGQIESFDQFVILLKNTVSQMVYKHAISTVVPSRPV). A disordered region spans residues 63 to 103 (VPSRPVSHHSNNAGGGTGSNFHHGSNAQGSSAPAQDSDETE). Positions 81 to 96 (SNFHHGSNAQGSSAPA) are enriched in polar residues.

It belongs to the Hfq family. As to quaternary structure, homohexamer.

RNA chaperone that binds small regulatory RNA (sRNAs) and mRNAs to facilitate mRNA translational regulation in response to envelope stress, environmental stress and changes in metabolite concentrations. Also binds with high specificity to tRNAs. The polypeptide is RNA-binding protein Hfq (Enterobacter sp. (strain 638)).